We begin with the raw amino-acid sequence, 217 residues long: ATP-dependent Clp protease proteolytic subunit (217 aa).

The Nucleophile role is filled by Ser121. Residue His146 is part of the active site.

This sequence belongs to the peptidase S14 family. Fourteen ClpP subunits assemble into 2 heptameric rings which stack back to back to give a disk-like structure with a central cavity, resembling the structure of eukaryotic proteasomes.

It is found in the cytoplasm. The catalysed reaction is Hydrolysis of proteins to small peptides in the presence of ATP and magnesium. alpha-casein is the usual test substrate. In the absence of ATP, only oligopeptides shorter than five residues are hydrolyzed (such as succinyl-Leu-Tyr-|-NHMec, and Leu-Tyr-Leu-|-Tyr-Trp, in which cleavage of the -Tyr-|-Leu- and -Tyr-|-Trp bonds also occurs).. In terms of biological role, cleaves peptides in various proteins in a process that requires ATP hydrolysis. Has a chymotrypsin-like activity. Plays a major role in the degradation of misfolded proteins. This chain is ATP-dependent Clp protease proteolytic subunit, found in Burkholderia lata (strain ATCC 17760 / DSM 23089 / LMG 22485 / NCIMB 9086 / R18194 / 383).